A 757-amino-acid chain; its full sequence is Large ribosomal subunit protein mL102 (rPPR5) (757 aa).

Polar residues predominate over residues 39-55 (EETQTPANANPETQSPD). The interval 39-82 (EETQTPANANPETQSPDAKSETKKNLTSTETRPLRERFQRGKRQ) is disordered. Basic and acidic residues predominate over residues 70–82 (RPLRERFQRGKRQ). PPR repeat units follow at residues 149–183 (DRDT…GVPW), 184–218 (DEDM…GVER), 219–253 (TIKS…GVEP), 254–288 (TRHT…GISP), 289–323 (DDAT…KIGP), 324–358 (SVVS…GIEP), 359–393 (NATT…HIAP), 395–429 (DNSI…NVPA), 430–464 (EAGH…EIIL), 473–507 (EPSA…GVQD), 510–541 (ALNN…GVPR), 542–576 (ESNA…GHVP), 577–611 (DSSL…NVGI), 614–648 (NMDL…GHTA), 651–680 (DSLL…DLSL), and 681–715 (EFSS…GSST).

Belongs to the PPR family. P subfamily. As to quaternary structure, component of the mitochondrial ribosome large subunit.

The protein resides in the mitochondrion. This chain is Large ribosomal subunit protein mL102 (rPPR5), found in Arabidopsis thaliana (Mouse-ear cress).